A 330-amino-acid chain; its full sequence is Transcription factor zip1 (330 aa).

Positions 133–148 are enriched in basic and acidic residues; the sequence is SKETQEKTSSQRELFE. Disordered regions lie at residues 133 to 165 and 238 to 277; these read SKET…SSSS and PSLS…NTAA. Residues 150–165 are compositionally biased toward low complexity; it reads KSSVASASKDNVSSSS. Over residues 244 to 262 the composition is skewed to polar residues; sequence KGAQSPNANSKRTKATSAI. The region spanning 264-327 is the bZIP domain; that stretch reads TAAEEDKRRR…NWLKGLIRPT (64 aa). A basic motif region spans residues 270-288; that stretch reads KRRRNTAASARFRIKKKLK. The tract at residues 292-320 is leucine-zipper; the sequence is LERTAKELTEKVAILETRVRELEMENNWL.

It belongs to the bZIP family. Interacts with pof1.

Its subcellular location is the nucleus. Its function is as follows. Mediates cell growth arrest in response to cadmium exposure, which is essential to maintain cell viability. Regulates cadmium stress specific genes. The protein is Transcription factor zip1 (zip1) of Schizosaccharomyces pombe (strain 972 / ATCC 24843) (Fission yeast).